Consider the following 693-residue polypeptide: Translation factor GUF1 homolog, chloroplastic (693 aa).

A chloroplast-targeting transit peptide spans 1–51 (MATDLSSSSTLLLSRNCKTPPFYHTTNSLSLSKTHHLYASRNAVVSRLRLL). In terms of domain architecture, tr-type G spans 86–267 (SNIRNFCIIA…AIVERIPSPR (182 aa)). GTP contacts are provided by residues 95-102 (AHIDHGKS), 160-164 (DTPGH), and 214-217 (NKID).

The protein belongs to the TRAFAC class translation factor GTPase superfamily. Classic translation factor GTPase family. LepA subfamily.

Its subcellular location is the plastid. The protein localises to the chloroplast. The catalysed reaction is GTP + H2O = GDP + phosphate + H(+). Functionally, promotes chloroplast protein synthesis. May act as a fidelity factor of the translation reaction, by catalyzing a one-codon backward translocation of tRNAs on improperly translocated ribosomes. The polypeptide is Translation factor GUF1 homolog, chloroplastic (Ricinus communis (Castor bean)).